A 245-amino-acid chain; its full sequence is S-methyl-5'-thioinosine phosphorylase (245 aa).

Residues T10 and 52–53 (RH) each bind phosphate. M185 contacts substrate. Position 186 (T186) interacts with phosphate. A substrate-binding site is contributed by 209–211 (NPA).

The protein belongs to the PNP/MTAP phosphorylase family. MTAP subfamily. In terms of assembly, homotrimer.

It carries out the reaction S-methyl-5'-thioinosine + phosphate = 5-(methylsulfanyl)-alpha-D-ribose 1-phosphate + hypoxanthine. The protein operates within purine metabolism; purine nucleoside salvage. Functionally, catalyzes the reversible phosphorylation of S-methyl-5'-thioinosine (MTI) to hypoxanthine and 5-methylthioribose-1-phosphate. Involved in the breakdown of S-methyl-5'-thioadenosine (MTA), a major by-product of polyamine biosynthesis. Catabolism of (MTA) occurs via deamination to MTI and phosphorolysis to hypoxanthine. Involved in quorum sensing. The sequence is that of S-methyl-5'-thioinosine phosphorylase from Pseudomonas aeruginosa (strain ATCC 15692 / DSM 22644 / CIP 104116 / JCM 14847 / LMG 12228 / 1C / PRS 101 / PAO1).